The sequence spans 379 residues: Cytochrome b (379 aa).

4 helical membrane passes run Phe33–Met53, Trp77–Ile98, Trp113–Leu133, and Phe178–Phe198. Residues His83 and His97 each contribute to the heme b site. Residues His182 and His196 each contribute to the heme b site. Residue His201 coordinates a ubiquinone. The next 4 helical transmembrane spans lie at Ile226 to Ser246, Leu288 to His308, Phe320 to Gly340, and Tyr347 to Arg367.

The protein belongs to the cytochrome b family. The cytochrome bc1 complex contains 11 subunits: 3 respiratory subunits (MT-CYB, CYC1 and UQCRFS1), 2 core proteins (UQCRC1 and UQCRC2) and 6 low-molecular weight proteins (UQCRH/QCR6, UQCRB/QCR7, UQCRQ/QCR8, UQCR10/QCR9, UQCR11/QCR10 and a cleavage product of UQCRFS1). This cytochrome bc1 complex then forms a dimer. The cofactor is heme b.

It is found in the mitochondrion inner membrane. Component of the ubiquinol-cytochrome c reductase complex (complex III or cytochrome b-c1 complex) that is part of the mitochondrial respiratory chain. The b-c1 complex mediates electron transfer from ubiquinol to cytochrome c. Contributes to the generation of a proton gradient across the mitochondrial membrane that is then used for ATP synthesis. In Dolichotis patagonum (Patagonian mara), this protein is Cytochrome b (MT-CYB).